We begin with the raw amino-acid sequence, 342 residues long: MISLKGISKTFKTKNGAVQAVDNVNLEIEAGQIFGIIGYSGAGKSTLIRLLNLLEKPTEGSVKIDGKALSSLTPSKLRAARQEIGMIFQHFNLLWSRTVRQNISFPLEVAGVPAAQRKKRVEELIELVGLHGRGDSYPSQLSGGQKQRVGIARALANNPKVLLCDEATSALDPKTTDSILDLLLDINEKLNLTIVLITHEMHVIQKICHQVAVMENGKIVEQGPVIDVFRKPKEQMTKEFVKQLAQTGEEEQSLWHLLDEKSDGTIVSLTFVGNPAEEQLVTELIRRFPIDISILQGNISKLQQGSYGKLYLRLLGATNEIEAALAYIRGKEIDVEVIEHDR.

The 240-residue stretch at 2-241 folds into the ABC transporter domain; it reads ISLKGISKTF…PKEQMTKEFV (240 aa). Residue 38 to 45 participates in ATP binding; that stretch reads GYSGAGKS.

This sequence belongs to the ABC transporter superfamily. Methionine importer (TC 3.A.1.24) family. As to quaternary structure, the complex is composed of two ATP-binding proteins (MetN), two transmembrane proteins (MetI) and a solute-binding protein (MetQ).

The protein localises to the cell membrane. The catalysed reaction is L-methionine(out) + ATP + H2O = L-methionine(in) + ADP + phosphate + H(+). The enzyme catalyses D-methionine(out) + ATP + H2O = D-methionine(in) + ADP + phosphate + H(+). Its function is as follows. Part of the ABC transporter complex MetNIQ involved in methionine import. Responsible for energy coupling to the transport system. The chain is Methionine import ATP-binding protein MetN 3 from Shouchella clausii (strain KSM-K16) (Alkalihalobacillus clausii).